The primary structure comprises 141 residues: ATP synthase epsilon chain (141 aa).

This sequence belongs to the ATPase epsilon chain family. In terms of assembly, F-type ATPases have 2 components, CF(1) - the catalytic core - and CF(0) - the membrane proton channel. CF(1) has five subunits: alpha(3), beta(3), gamma(1), delta(1), epsilon(1). CF(0) has three main subunits: a, b and c.

It localises to the cell inner membrane. Functionally, produces ATP from ADP in the presence of a proton gradient across the membrane. The polypeptide is ATP synthase epsilon chain (Gluconacetobacter diazotrophicus (strain ATCC 49037 / DSM 5601 / CCUG 37298 / CIP 103539 / LMG 7603 / PAl5)).